We begin with the raw amino-acid sequence, 430 residues long: Tol-Pal system protein TolB (430 aa).

The first 21 residues, 1 to 21 (MKQALRVAFGFLILWASVLHA), serve as a signal peptide directing secretion.

This sequence belongs to the TolB family. The Tol-Pal system is composed of five core proteins: the inner membrane proteins TolA, TolQ and TolR, the periplasmic protein TolB and the outer membrane protein Pal. They form a network linking the inner and outer membranes and the peptidoglycan layer.

It localises to the periplasm. Its function is as follows. Part of the Tol-Pal system, which plays a role in outer membrane invagination during cell division and is important for maintaining outer membrane integrity. TolB occupies a key intermediary position in the Tol-Pal system because it communicates directly with both membrane-embedded components, Pal in the outer membrane and TolA in the inner membrane. The polypeptide is Tol-Pal system protein TolB (Shigella flexneri).